A 575-amino-acid polypeptide reads, in one-letter code: Septation ring formation regulator EzrA (575 aa).

At 1–8 (MSNGQLIY) the chain is on the extracellular side. The helical transmembrane segment at 9 to 27 (LMVAIAVILVLAYVVAIFL) threads the bilayer. Over 28-575 (RKRNEGRLEA…YEKTRETIRF (548 aa)) the chain is Cytoplasmic. Coiled-coil stretches lie at residues 105–191 (LKAS…FVTL), 265–301 (LYEA…LYDI), 354–416 (VRRI…IEKD), and 456–526 (TASN…IQEA).

Belongs to the EzrA family.

The protein localises to the cell membrane. Negative regulator of FtsZ ring formation; modulates the frequency and position of FtsZ ring formation. Inhibits FtsZ ring formation at polar sites. Interacts either with FtsZ or with one of its binding partners to promote depolymerization. The chain is Septation ring formation regulator EzrA from Streptococcus pneumoniae serotype 4 (strain ATCC BAA-334 / TIGR4).